A 1310-amino-acid chain; its full sequence is Vacuolating cytotoxin autotransporter (1310 aa).

The first 30 residues, 1 to 30 (MEIQQTHRKINRPIISLALVGVLMGTELGA), serve as a signal peptide directing secretion. The tract at residues 339-364 (PEGGYESKTKDNPQNNPKNDAQKTEI) is disordered. The span at 350–364 (NPQNNPKNDAQKTEI) shows a compositional bias: polar residues. The Autotransporter domain occupies 1038 to 1310 (KYEKPTNVWA…ASNLGMRYSF (273 aa)).

The protein resides in the periplasm. The protein localises to the secreted. It localises to the cell surface. Its subcellular location is the cell outer membrane. Induces vacuolation of eukaryotic cells. Causes ulceration and gastric lesions. This is Vacuolating cytotoxin autotransporter (vacA) from Helicobacter pylori (Campylobacter pylori).